A 313-amino-acid chain; its full sequence is Malate dehydrogenase (313 aa).

NAD(+)-binding positions include 8-13 and aspartate 33; that span reads GAGNVG. Arginine 83 and arginine 89 together coordinate substrate. NAD(+)-binding positions include asparagine 96 and 119-121; that span reads ISN. Substrate contacts are provided by asparagine 121 and arginine 152. Catalysis depends on histidine 176, which acts as the Proton acceptor.

The protein belongs to the LDH/MDH superfamily. MDH type 3 family.

The catalysed reaction is (S)-malate + NAD(+) = oxaloacetate + NADH + H(+). In terms of biological role, catalyzes the reversible oxidation of malate to oxaloacetate. This is Malate dehydrogenase from Bacteroides fragilis (strain ATCC 25285 / DSM 2151 / CCUG 4856 / JCM 11019 / LMG 10263 / NCTC 9343 / Onslow / VPI 2553 / EN-2).